The chain runs to 368 residues: Somatostatin receptor type 5 (368 aa).

Topologically, residues 1–45 (MEPLFPASPLTTWNTSSVVPSGSGDENGTLAGLGPSPGARAVVVP) are extracellular. 2 N-linked (GlcNAc...) asparagine glycosylation sites follow: Asn-14 and Asn-27. The chain crosses the membrane as a helical span at residues 46–66 (VLYLLVCAVGLGGNTLVIYVV). Residues 67–77 (LRHAKMKTVTN) lie on the Cytoplasmic side of the membrane. Residues 78–98 (IYILNLAVADVLLMLGLPFVA) form a helical membrane-spanning segment. The Extracellular segment spans residues 99–115 (TQNAISYWPFGPVLCRL). Cys-113 and Cys-188 are joined by a disulfide. The helical transmembrane segment at 116–136 (VMTLDGINQFTSIFCLTVMSV) threads the bilayer. Over 137 to 158 (DRYLAVVHPIRSARWRRPRVAK) the chain is Cytoplasmic. A helical transmembrane segment spans residues 159–179 (LASAAVWAFSLVMSLPLVVFA). Topologically, residues 180–207 (DIQEGWNTCNLSWPEPVGLWGAVFIIYT) are extracellular. N-linked (GlcNAc...) asparagine glycosylation is present at Asn-189. A helical transmembrane segment spans residues 208-228 (SVLGFFGPLLVICLCYLLIVV). At 229 to 251 (KLKASGVRVGSTRRRSERKVTRM) the chain is on the cytoplasmic side. The helical transmembrane segment at 252 to 272 (VVVVVLVFAGCWLPFFIVNIV) threads the bilayer. The Extracellular portion of the chain corresponds to 273–286 (NLAFALPEEPASAG). The helical transmembrane segment at 287–309 (AYFFVVVLSYANSCANPLLYGFL) threads the bilayer. At 310-368 (SDNFRQSFRKVLCLRKGYGAGAEDADATEPQPGPSSRLQEAMMPVRSCKANGLMQTSKL) the chain is on the cytoplasmic side. The S-palmitoyl cysteine; by ZDHHC5 moiety is linked to residue Cys-322.

This sequence belongs to the G-protein coupled receptor 1 family. In terms of assembly, heterodimer with SSTR2. Heterodimerization with SSTR2 increases cell growth inhibition activity of SSTR2. Palmitoylated by ZDHHC5, but not ZDHHC3, nor ZDHHC8. Palmitoylation creates an additional intracellular loop which is thought to be important for efficient coupling to G-proteins and may target the protein to lipid rafts.

It is found in the cell membrane. Functionally, receptor for somatostatin 28 and to a lesser extent for somatostatin-14. The activity of this receptor is mediated by G proteins which inhibit adenylyl cyclase. Increases cell growth inhibition activity of SSTR2 following heterodimerization. The chain is Somatostatin receptor type 5 (SSTR5) from Bos taurus (Bovine).